The primary structure comprises 449 residues: Keratin, type I cytoskeletal 27 (449 aa).

Positions 1-73 are head; it reads MSVRFSSASR…VNEHGLLSGN (73 aa). Positions 74-109 are coil 1A; the sequence is EKVTMQNLNDRLASYLENVQALEEANADLEQKIKDW. The region spanning 74–389 is the IF rod domain; it reads EKVTMQNLND…LLIGGDEGSC (316 aa). The tract at residues 110-131 is linker 1; sequence YEKFGPGSCRGLDHDYSRYFPI. The interval 132 to 223 is coil 1B; that stretch reads IDDLRTQIIS…KNHEEEMQAL (92 aa). Positions 224–246 are linker 12; it reads QCAAGGNVNVEMNAAPGVDLTVL. The interval 247–385 is coil 2; sequence LNNMRAEYEA…ETYCLLIGGD (139 aa). A tail region spans residues 386 to 449; sequence EGSCVKSKGQ…NNKNEQRIPS (64 aa). A disordered region spans residues 425 to 449; the sequence is LSSRVHTLEEKSTKVNNKNEQRIPS. Residues 430–449 show a composition bias toward basic and acidic residues; it reads HTLEEKSTKVNNKNEQRIPS.

It belongs to the intermediate filament family. As to quaternary structure, heterotetramer of two type I and two type II keratins. Interacts with KRT6A to form filaments.

It localises to the cytoplasm. Its function is as follows. Essential for the proper assembly of type I and type II keratin protein complexes and formation of keratin intermediate filaments in the inner root sheath (irs). The polypeptide is Keratin, type I cytoskeletal 27 (Rattus norvegicus (Rat)).